The primary structure comprises 237 residues: Ribonuclease PH (237 aa).

Phosphate contacts are provided by residues Arg86 and 124–126 (GTR).

It belongs to the RNase PH family. Homohexameric ring arranged as a trimer of dimers.

The catalysed reaction is tRNA(n+1) + phosphate = tRNA(n) + a ribonucleoside 5'-diphosphate. Its function is as follows. Phosphorolytic 3'-5' exoribonuclease that plays an important role in tRNA 3'-end maturation. Removes nucleotide residues following the 3'-CCA terminus of tRNAs; can also add nucleotides to the ends of RNA molecules by using nucleoside diphosphates as substrates, but this may not be physiologically important. Probably plays a role in initiation of 16S rRNA degradation (leading to ribosome degradation) during starvation. This is Ribonuclease PH from Bradyrhizobium diazoefficiens (strain JCM 10833 / BCRC 13528 / IAM 13628 / NBRC 14792 / USDA 110).